The following is a 573-amino-acid chain: 60 kDa heat shock protein, mitochondrial (573 aa).

Residues 1–26 (MLRLPTVFRQMRPVSRVLAPHLTRAY) constitute a mitochondrion transit peptide. Lysine 31 is modified (N6-succinyllysine). 2 positions are modified to phosphoserine: serine 67 and serine 70. ATP is bound at residue lysine 75. Lysine 75 carries the post-translational modification N6-acetyllysine. Lysine 82 carries the N6-acetyllysine; alternate modification. Lysine 82 is subject to N6-succinyllysine; alternate. An N6-acetyllysine modification is found at lysine 87. At tyrosine 90 the chain carries Phosphotyrosine. N6-acetyllysine is present on lysine 91. Residue 111–115 (DGTTT) participates in ATP binding. Lysine 125 carries the post-translational modification N6-acetyllysine; alternate. Lysine 125 is modified (N6-succinyllysine; alternate). Position 130 is an N6-acetyllysine (lysine 130). At lysine 133 the chain carries N6-acetyllysine; alternate. Lysine 133 is modified (N6-succinyllysine; alternate). Lysine 133 is subject to N6-malonyllysine; alternate. Lysine 156 carries the N6-acetyllysine modification. N6-acetyllysine; alternate occurs at positions 191, 202, 205, 218, and 236. 5 positions are modified to N6-succinyllysine; alternate: lysine 191, lysine 202, lysine 205, lysine 218, and lysine 236. Residue lysine 249 is modified to N6-acetyllysine. The residue at position 250 (lysine 250) is an N6-acetyllysine; alternate. Position 250 is an N6-succinyllysine; alternate (lysine 250). Residues lysine 269 and lysine 292 each carry the N6-acetyllysine modification. An N6-succinyllysine modification is found at lysine 301. Lysine 314 is modified (N6-acetyllysine). Lysine 352 bears the N6-acetyllysine; alternate mark. Lysine 352 carries the post-translational modification N6-succinyllysine; alternate. Lysine 389 is subject to N6-acetyllysine. Lysine 396 is modified (N6-acetyllysine; alternate). Lysine 396 carries the N6-succinyllysine; alternate modification. Serine 410 is modified (phosphoserine). Glycine 440 serves as a coordination point for ATP. At lysine 469 the chain carries N6-acetyllysine. The residue at position 481 (lysine 481) is an N6-acetyllysine; alternate. An N6-succinyllysine; alternate modification is found at lysine 481. The residue at position 488 (serine 488) is a Phosphoserine. Position 520 (aspartate 520) interacts with ATP. Lysine 551 participates in a covalent cross-link: Glycyl lysine isopeptide (Lys-Gly) (interchain with G-Cter in SUMO2).

The protein belongs to the chaperonin (HSP60) family. As to quaternary structure, homoheptamer arranged in a ring structure. The functional units of these chaperonins consist of heptameric rings of the large subunit Hsp60, which function as a back-to-back double ring. Interacts with 2 heptameric Hsp10 rings to form the symmetrical football complex. Interacts with HRAS. Interacts with ATAD3A. Interacts with ETFBKMT and EEF1AKMT3. Interacts with MFHAS1.

It localises to the mitochondrion matrix. The enzyme catalyses ATP + H2O + a folded polypeptide = ADP + phosphate + an unfolded polypeptide.. In terms of biological role, chaperonin implicated in mitochondrial protein import and macromolecular assembly. Together with Hsp10, facilitates the correct folding of imported proteins. May also prevent misfolding and promote the refolding and proper assembly of unfolded polypeptides generated under stress conditions in the mitochondrial matrix. The functional units of these chaperonins consist of heptameric rings of the large subunit Hsp60, which function as a back-to-back double ring. In a cyclic reaction, Hsp60 ring complexes bind one unfolded substrate protein per ring, followed by the binding of ATP and association with 2 heptameric rings of the co-chaperonin Hsp10. This leads to sequestration of the substrate protein in the inner cavity of Hsp60 where, for a certain period of time, it can fold undisturbed by other cell components. Synchronous hydrolysis of ATP in all Hsp60 subunits results in the dissociation of the chaperonin rings and the release of ADP and the folded substrate protein. The protein is 60 kDa heat shock protein, mitochondrial (HSPD1) of Pongo abelii (Sumatran orangutan).